Consider the following 453-residue polypeptide: Secreted triacylglycerol lipase LIP2 (453 aa).

An N-terminal signal peptide occupies residues Met1–Ala19. Residue Asn98 is glycosylated (N-linked (GlcNAc...) asparagine). Cys115 and Cys284 are disulfide-bonded. The Nucleophile role is filled by Ser197. Asn230 carries N-linked (GlcNAc...) asparagine glycosylation. Residues Asp344 and His378 contribute to the active site. A disulfide bridge connects residues Cys360 and Cys406.

It belongs to the AB hydrolase superfamily. Lipase family. Class Lip subfamily.

Its subcellular location is the secreted. It carries out the reaction a triacylglycerol + H2O = a diacylglycerol + a fatty acid + H(+). The enzyme catalyses a monoacylglycerol + H2O = glycerol + a fatty acid + H(+). The catalysed reaction is a diacylglycerol + H2O = a monoacylglycerol + a fatty acid + H(+). Its activity is regulated as follows. The activity is significantly increased in the presence of Triton X-100 and partially inhibited by PMSF but unaffected by univalent and divalent metal ions. Activity is significantly decreased in acetate buffer compared to that in citrate buffer at the same pH. Functionally, major secreted lipase involved in Dandruff and seborrheic dermatitis (D/SD) probably via lipase-mediated breakdown of sebaceous lipids and release of irritating free fatty acids. Has triacylglycerol lipase activity and is able to hydrolyze triolein, tristearin, trilinolein, tripalmitoylglycerol and trihexadecenoin. Hydrolyze diacylglycerols such as distearin, dilinolein, dipalmitoylglycerol and dipalmitolein. Shows high esterase activity against 4-nitrophenyl palmitate and 1-naphthyl palmitate but not 1-naphthyl acetate, suggesting that it specifically recognizes fatty acids. Mostly converts monoolein to di- and triolein, while free fatty acids are only produced in low amounts. This Malassezia globosa (strain ATCC MYA-4612 / CBS 7966) (Dandruff-associated fungus) protein is Secreted triacylglycerol lipase LIP2.